A 123-amino-acid chain; its full sequence is Large ribosomal subunit protein uL14 (123 aa).

This sequence belongs to the universal ribosomal protein uL14 family. Part of the 50S ribosomal subunit. Forms a cluster with proteins L3 and L19. In the 70S ribosome, L14 and L19 interact and together make contacts with the 16S rRNA in bridges B5 and B8.

Its function is as follows. Binds to 23S rRNA. Forms part of two intersubunit bridges in the 70S ribosome. The protein is Large ribosomal subunit protein uL14 of Proteus mirabilis (strain HI4320).